Consider the following 385-residue polypeptide: Trichodiene synthase (385 aa).

Belongs to the trichodiene synthase family.

The enzyme catalyses (2E,6E)-farnesyl diphosphate = trichodiene + diphosphate. The protein operates within sesquiterpene biosynthesis; trichothecene biosynthesis. TS is a member of the terpene cyclase group of enzymes. It catalyzes the isomerization and cyclization of farnesyl pyro-phosphate to form trichodiene, the first cyclic intermediate in the biosynthetic pathway for trichothecenes. It serves to branch trichothecene biosynthesis from the isoprenoid pathway. In Paramyrothecium roridum (Myrothecium leaf spot fungus), this protein is Trichodiene synthase (TRI5).